Reading from the N-terminus, the 120-residue chain is Methylglyoxal synthase (120 aa).

The MGS-like domain occupies 1–120 (MRIALIAHDN…TAEILVESVL (120 aa)). Substrate-binding positions include His8, Lys12, and 54–55 (SG). Catalysis depends on Asp60, which acts as the Proton donor/acceptor. His87 lines the substrate pocket.

This sequence belongs to the methylglyoxal synthase family.

The enzyme catalyses dihydroxyacetone phosphate = methylglyoxal + phosphate. Functionally, catalyzes the formation of methylglyoxal from dihydroxyacetone phosphate. This Natranaerobius thermophilus (strain ATCC BAA-1301 / DSM 18059 / JW/NM-WN-LF) protein is Methylglyoxal synthase.